The primary structure comprises 627 residues: 2-oxoacid:ferredoxin oxidoreductase 1, subunit alpha (627 aa).

Positions 253–257 (YPITP) match the YPITP motif motif. Positions 256 and 344 each coordinate substrate.

In terms of assembly, heterodimer composed of an alpha and a beta subunit.

The enzyme catalyses a 2-oxocarboxylate + 2 oxidized [2Fe-2S]-[ferredoxin] + CoA = an acyl-CoA + 2 reduced [2Fe-2S]-[ferredoxin] + CO2 + H(+). With respect to regulation, inhibited by low concentration of 4-fluoro-7-nitrobenzofurazan (NBD-F). Catalyzes the coenzyme A-dependent oxidative decarboxylation of different 2-oxoacids such as 2-oxoglutarate, pyruvate and 2-oxobutyrate to form their CoA derivatives. The sequence is that of 2-oxoacid:ferredoxin oxidoreductase 1, subunit alpha from Sulfurisphaera tokodaii (strain DSM 16993 / JCM 10545 / NBRC 100140 / 7) (Sulfolobus tokodaii).